A 225-amino-acid polypeptide reads, in one-letter code: Membrin-11 (225 aa).

Ala2 carries the N-acetylalanine modification. Over 2-200 (ASGIVEGGGS…VLRLIERRNR (199 aa)) the chain is Cytoplasmic. Residues 201 to 221 (VDTWIKYAGMIATLVILYLFI) form a helical; Anchor for type IV membrane protein membrane-spanning segment. Residues 222–225 (RWTR) lie on the Vesicular side of the membrane.

Belongs to the GOSR2 family.

Its subcellular location is the golgi apparatus membrane. Functionally, involved in transport of proteins from the cis/medial-Golgi to the trans-Golgi network. The sequence is that of Membrin-11 (MEMB11) from Arabidopsis thaliana (Mouse-ear cress).